The primary structure comprises 325 residues: Inner membrane protein YrbG (325 aa).

Residues 1-5 (MLLAT) are Periplasmic-facing. A helical transmembrane segment spans residues 6-26 (ALLIVGLLLVVYSADRLVFAA). At 27–37 (SILCRTFGIPP) the chain is on the cytoplasmic side. A helical membrane pass occupies residues 38–58 (LIIGMTVVSIGTSLPEVIVSL). Residues 59 to 67 (AASLHEQRD) are Periplasmic-facing. Residues 68–88 (LAVGTALGSNIINILLILGLA) form a helical membrane-spanning segment. Over 89 to 104 (ALVRPFTVHSDVLRRE) the chain is Cytoplasmic. A helical membrane pass occupies residues 105-125 (LPLMLLVSVVAGSVLYDGQLS). Position 126 (R126) is a topological domain, periplasmic. A helical transmembrane segment spans residues 127-147 (SDGIFLLFLAVLWLLFIVKLA). Residues 148-169 (RQAERQGTDSLTREQLAELPRD) are Cytoplasmic-facing. Residues 170–190 (GGLPVAFLWLGIALIIMPVAT) form a helical membrane-spanning segment. At 191–198 (RMVVDNAT) the chain is on the periplasmic side. A helical membrane pass occupies residues 199–219 (VLANYFAISELTMGLTAIAIG). The Cytoplasmic segment spans residues 220-243 (TSLPELATAIAGVRKGENDIAVGN). Residues 244 to 264 (IIGANIFNIVIVLGLPALITP) form a helical membrane-spanning segment. The Periplasmic portion of the chain corresponds to 265–269 (GEIDP). Residues 270 to 290 (LAYSRDYSVMLLVSIIFALLC) form a helical membrane-spanning segment. The Cytoplasmic portion of the chain corresponds to 291–302 (WRRSPQPGRGVG). A helical transmembrane segment spans residues 303–323 (VLLTGGFIVWLAMLYWLSPIL). Over 324 to 325 (VE) the chain is Periplasmic.

It belongs to the Ca(2+):cation antiporter (CaCA) (TC 2.A.19) family.

It localises to the cell inner membrane. This Escherichia coli (strain K12) protein is Inner membrane protein YrbG (yrbG).